Here is a 192-residue protein sequence, read N- to C-terminus: Thymidine kinase (192 aa).

Residues 9 to 16 and 87 to 90 contribute to the ATP site; these read STMNAGKS and DEAQ. The Proton acceptor role is filled by Glu88. Cys145, Cys147, Cys182, and His185 together coordinate Zn(2+).

It belongs to the thymidine kinase family. As to quaternary structure, homotetramer.

The protein localises to the cytoplasm. The enzyme catalyses thymidine + ATP = dTMP + ADP + H(+). This Pasteurella multocida (strain Pm70) protein is Thymidine kinase.